The following is a 169-amino-acid chain: Protein Flattop homolog (169 aa).

The disordered stretch occupies residues 53-169; it reads IPRSSRSPWG…SPKLATPEPC (117 aa). Residues 119–130 show a composition bias toward polar residues; it reads VQASPRNASPLQ.

Belongs to the Flattop family.

The protein resides in the cytoplasm. The protein localises to the cytoskeleton. It localises to the cilium basal body. Its subcellular location is the cell projection. It is found in the cilium. The protein resides in the apical cell membrane. Acts as a regulator of cilium basal body docking and positioning in mono- and multiciliated cells. This Nematostella vectensis (Starlet sea anemone) protein is Protein Flattop homolog.